A 410-amino-acid polypeptide reads, in one-letter code: MADQKRKLADPDAEAPTGKMARAGPGELDLVYPFWYQVAAPTEITPPFLDPNGPLYSTDGLLNVRLTAPLVIIRQSNGNAIGVKTDGSITVNADGALQIGISTAGPLTTTANGIDLNIDPKTLVVDGSSGKNVLGVLLKGQGALQSSAQGIGVAVDESLQIVDNTLEVKVDAAGPLAVTAAGVGLQYDNTQFKVTNGTLQLYQAPTSSVAAFTSGTIGLSSPTGNFVSSSNNPFNGSYFLQQINTMGMLTTSLYVKVDTTTMGTRPTGAVNENARYFTVWVSSFLTQCNPSNIGQGTLEPSNISMTSFEPARNPISPPVFNMNQNIPYYASRFGVLESYRPIFTGSLNTGSIDVRMQVTPVLATNNTTYNLIAFTFQCASAGLFNPTVNGTVAIGPVVHTCPAARAPVTV.

Positions 1–10 are enriched in basic and acidic residues; it reads MADQKRKLAD. Residues 1 to 22 form a disordered region; sequence MADQKRKLADPDAEAPTGKMAR.

It belongs to the adenoviridae fiber family. As to quaternary structure, homotrimer. Interacts (via N-terminal tail region) with pentons.

The protein resides in the virion. It localises to the host nucleus. In terms of biological role, forms spikes that protrude from each vertex of the icosahedral capsid. Interacts with host receptor to provide virion initial attachment to target cell. Fiber proteins are shed during virus entry, when virus is still at the cell surface. This Fowl adenovirus A serotype 1 (strain CELO / Phelps) (FAdV-1) protein is Fiber protein 2.